We begin with the raw amino-acid sequence, 885 residues long: Translation initiation factor IF-2 (885 aa).

Disordered regions lie at residues 135-159 (KAKAEAEAKAKAEAEAKAKAKAAAE) and 184-289 (QAEA…PESM). A compositionally biased stretch (basic and acidic residues) spans 184–232 (QAEATKRKQDEEAAKAAEKARLLAEENSKRWAEEERQRLEAERYSDHHI). A compositionally biased stretch (basic residues) spans 253–266 (GRRARNKNTAKSKR). Basic and acidic residues predominate over residues 267–276 (GGKDARDGRE). Residues 385–554 (PRAPVVTIMG…LLQAEVLELK (170 aa)) enclose the tr-type G domain. Residues 394–401 (GHVDHGKT) form a G1 region. GTP is bound at residue 394–401 (GHVDHGKT). A G2 region spans residues 419-423 (GITQH). Residues 440–443 (DTPG) form a G3 region. Residues 440 to 444 (DTPGH) and 494 to 497 (NKMD) each bind GTP. The interval 494–497 (NKMD) is G4. The interval 530 to 532 (SAK) is G5.

It belongs to the TRAFAC class translation factor GTPase superfamily. Classic translation factor GTPase family. IF-2 subfamily.

It localises to the cytoplasm. In terms of biological role, one of the essential components for the initiation of protein synthesis. Protects formylmethionyl-tRNA from spontaneous hydrolysis and promotes its binding to the 30S ribosomal subunits. Also involved in the hydrolysis of GTP during the formation of the 70S ribosomal complex. This chain is Translation initiation factor IF-2, found in Shewanella sp. (strain MR-7).